Consider the following 142-residue polypeptide: Natriuretic peptides A (142 aa).

Positions 1-23 are cleaved as a signal peptide; the sequence is MMLKTVIYTGVLFLICNKVLVRA. Positions 24–112 are excised as a propeptide; it reads DPLYSPYSSK…RLRDLLMAPR (89 aa). Residues 47 to 123 are disordered; sequence DTLGQDEGND…NRGSSGCFGS (77 aa). A compositionally biased stretch (basic and acidic residues) spans 77 to 94; that stretch reads WDRERERQWPASDYKKPQ. A disulfide bridge connects residues C120 and C136.

This sequence belongs to the natriuretic peptide family. In terms of processing, cleaved upon secretion to produce the functional hormone. In terms of tissue distribution, expressed in heart atrium and to a lower extent in heart ventricle, but not in brain.

Its subcellular location is the secreted. Its function is as follows. Hormone playing a key role in cardiovascular homeostasis through regulation of natriuresis, diuresis, and vasodilation. Has a cGMP-stimulating activity. This Acipenser transmontanus (White sturgeon) protein is Natriuretic peptides A (nppa).